A 193-amino-acid polypeptide reads, in one-letter code: Xanthine phosphoribosyltransferase (193 aa).

Xanthine-binding residues include leucine 20 and threonine 27. Residue 128 to 132 participates in 5-phospho-alpha-D-ribose 1-diphosphate binding; the sequence is ANGQA. Lysine 156 is a xanthine binding site.

It belongs to the purine/pyrimidine phosphoribosyltransferase family. Xpt subfamily. In terms of assembly, homodimer.

The protein resides in the cytoplasm. It catalyses the reaction XMP + diphosphate = xanthine + 5-phospho-alpha-D-ribose 1-diphosphate. It participates in purine metabolism; XMP biosynthesis via salvage pathway; XMP from xanthine: step 1/1. Its function is as follows. Converts the preformed base xanthine, a product of nucleic acid breakdown, to xanthosine 5'-monophosphate (XMP), so it can be reused for RNA or DNA synthesis. The sequence is that of Xanthine phosphoribosyltransferase from Streptococcus pneumoniae (strain P1031).